A 57-amino-acid polypeptide reads, in one-letter code: Putative antitoxin VapB4 (57 aa).

Functionally, possibly the antitoxin component of a type II toxin-antitoxin (TA) system. Its cognate toxin is VapC4 (Potential). The polypeptide is Putative antitoxin VapB4 (vapB4) (Methanocaldococcus jannaschii (strain ATCC 43067 / DSM 2661 / JAL-1 / JCM 10045 / NBRC 100440) (Methanococcus jannaschii)).